The sequence spans 336 residues: Phospho-N-acetylmuramoyl-pentapeptide-transferase (336 aa).

Helical transmembrane passes span 3 to 23 (LTLI…PYFI), 53 to 73 (GGTV…LFSI), 78 to 98 (SLAL…IGFL), 118 to 138 (LALQ…PSGI), 143 to 163 (VFGY…FWVV), 174 to 194 (GIDG…GVIA), 200 to 220 (FDVL…FCFN), 226 to 246 (VFMG…ISIA), 251 to 271 (WTLL…MLQV), and 316 to 336 (AFLW…LYVF).

The protein belongs to the glycosyltransferase 4 family. MraY subfamily. The cofactor is Mg(2+).

The protein resides in the cell membrane. The enzyme catalyses UDP-N-acetyl-alpha-D-muramoyl-L-alanyl-gamma-D-glutamyl-L-lysyl-D-alanyl-D-alanine + di-trans,octa-cis-undecaprenyl phosphate = Mur2Ac(oyl-L-Ala-gamma-D-Glu-L-Lys-D-Ala-D-Ala)-di-trans,octa-cis-undecaprenyl diphosphate + UMP. Its pathway is cell wall biogenesis; peptidoglycan biosynthesis. Functionally, catalyzes the initial step of the lipid cycle reactions in the biosynthesis of the cell wall peptidoglycan: transfers peptidoglycan precursor phospho-MurNAc-pentapeptide from UDP-MurNAc-pentapeptide onto the lipid carrier undecaprenyl phosphate, yielding undecaprenyl-pyrophosphoryl-MurNAc-pentapeptide, known as lipid I. In Streptococcus pyogenes serotype M3 (strain ATCC BAA-595 / MGAS315), this protein is Phospho-N-acetylmuramoyl-pentapeptide-transferase.